Here is a 513-residue protein sequence, read N- to C-terminus: Steroid (22S)-hydroxylase (513 aa).

Residues 8–28 (TLLPLLLLPSLLSLLLFLILL) traverse the membrane as a helical segment. A disordered region spans residues 252–277 (DIKEEDQEEEEVKTEDEAEMSKSDHV). Over residues 254 to 269 (KEEDQEEEEVKTEDEA) the composition is skewed to acidic residues. Position 462 (C462) interacts with heme.

Belongs to the cytochrome P450 family. Heme is required as a cofactor. Expressed in stems, leaves, shoots, and roots, with a higher expression in siliques and apical shoots.

Its subcellular location is the membrane. The enzyme catalyses a C27-steroid + reduced [NADPH--hemoprotein reductase] + O2 = a (22S)-22-hydroxy C27-steroid + oxidized [NADPH--hemoprotein reductase] + H2O + H(+). The catalysed reaction is a C28-steroid + reduced [NADPH--hemoprotein reductase] + O2 = a (22S)-22-hydroxy C28-steroid + oxidized [NADPH--hemoprotein reductase] + H2O + H(+). It catalyses the reaction a C29-steroid + reduced [NADPH--hemoprotein reductase] + O2 = a (22S)-22-hydroxy C29-steroid + oxidized [NADPH--hemoprotein reductase] + H2O + H(+). It carries out the reaction cholesterol + reduced [NADPH--hemoprotein reductase] + O2 = (22S)-22-hydroxycholesterol + oxidized [NADPH--hemoprotein reductase] + H2O + H(+). The enzyme catalyses cholestanol + reduced [NADPH--hemoprotein reductase] + O2 = (22S)-22-hydroxycholestanol + oxidized [NADPH--hemoprotein reductase] + H2O + H(+). The catalysed reaction is campestanol + reduced [NADPH--hemoprotein reductase] + O2 = 6-deoxycathasterone + oxidized [NADPH--hemoprotein reductase] + H2O + H(+). It catalyses the reaction campesterol + reduced [NADPH--hemoprotein reductase] + O2 = (22S)-22-hydroxycampesterol + oxidized [NADPH--hemoprotein reductase] + H2O + H(+). It carries out the reaction 6-oxocampestanol + reduced [NADPH--hemoprotein reductase] + O2 = cathasterone + oxidized [NADPH--hemoprotein reductase] + H2O + H(+). The enzyme catalyses sitosterol + reduced [NADPH--hemoprotein reductase] + O2 = (22S)-22-hydroxysitosterol + oxidized [NADPH--hemoprotein reductase] + H2O + H(+). It functions in the pathway plant hormone biosynthesis; brassinosteroid biosynthesis. Its function is as follows. Catalyzes the C22-alpha-hydroxylation step in brassinosteroids biosynthesis. Converts campesterol (CR) to (22S)-22-hydroxycampesterol (22-OHCR, 22-hydroxyCR), campestanol (CN) to 6-deoxycathasterone (6-deoxoCT), and 6-oxocampestanol (6-oxoCN) to cathasterone (CT). Can also use cholesterol and cholestanol as substrates. The sequence is that of Steroid (22S)-hydroxylase from Arabidopsis thaliana (Mouse-ear cress).